The primary structure comprises 444 residues: MGFLTAAIRVSTSAASMLLRRKSRQLGFLASSSPLFSSFNSMNRTISSCNIVCKVLHKESLTRPMWNVSFLRSSSFHSTPARETGDDDISKSENSSSQDGDSCTKLKRKKLKGKRAVVRWLKFFRWKKKKEFERMTSEEKILNKLRKARKKEERLMETMKKLEPSESAETTHDPEILTPEEHFYYLKMGLKCKNYVPVGRRGIYQGVILNMHLHWKKHQTLQVVIKTFTPDEVKEIAVELARLTGGIVLDVHEGNTIIMYRGKNYVQPPTEIMSPRITLPRKKALDKSKCRDALRAVRKYIPRLEQELQLLQAQAETKRDYTNVKVDDNQERSEELKKIIERSEECLEDEQEEDEAGLELATDSDLSDIFETDSELEDAKTERPLFLEEFEKFPAINNREDEDFGDLGKAKSEGEENDDDKSPNFDEVDKMFLRAAFLLKKKRR.

A chloroplast-targeting transit peptide spans 1-72 (MGFLTAAIRV…RPMWNVSFLR (72 aa)). The interval 77-107 (HSTPARETGDDDISKSENSSSQDGDSCTKLK) is disordered. Residues 92–101 (SENSSSQDGD) are compositionally biased toward polar residues. Positions 175–272 (EILTPEEHFY…KNYVQPPTEI (98 aa)) constitute a CRM domain. Residues 292-355 (DALRAVRKYI…CLEDEQEEDE (64 aa)) are a coiled coil. Disordered regions lie at residues 344–364 (EECL…ATDS) and 392–426 (KFPA…PNFD). The span at 346–357 (CLEDEQEEDEAG) shows a compositional bias: acidic residues. The span at 406–426 (DLGKAKSEGEENDDDKSPNFD) shows a compositional bias: basic and acidic residues.

The protein localises to the plastid. It localises to the chloroplast. This is an uncharacterized protein from Arabidopsis thaliana (Mouse-ear cress).